Here is a 415-residue protein sequence, read N- to C-terminus: PRKCA-binding protein (415 aa).

The PDZ domain maps to 22–105; sequence KVTLQKDAQN…EVTIHYNKLQ (84 aa). C44 and C46 together coordinate Zn(2+). T82 is subject to Phosphothreonine. One can recognise an AH domain in the interval 144–357; the sequence is LCNDGLVKRL…CYAVLRDADV (214 aa). A disordered region spans residues 376-415; sequence EEFTDGEEEEEEEDTAAGEPSRDTRGAAGPLDKGGSWCDS. The segment covering 377–391 has biased composition (acidic residues); sequence EFTDGEEEEEEEDTA. The S-palmitoyl cysteine; by DHHC8 moiety is linked to residue C413.

As to quaternary structure, monomer and homodimer. Interacts with CXADR. Interacts presynaptically with the glutamate receptors GRIA2, GRIA3, GRIK3, isoform 3 of GRIA4, isoform A of GRM4, GRM7 and GRM8; with NAPA and NAPB; and with BTG2. The interaction with NAPA and NAPB disrupts the interaction with GRIA2, conducting to the internalization of GRIA2. Interacts with PRKCA; with the amine transporters SLC6A2 and SLC6A3; with the channels ASIC1 and ASIC2; with the GTP-binding proteins ARF1 and ARF3; with the ephrin receptor tyrosine kinases EPHA7, EPHB1 and EPHB2; with ERBB2 and through its PDZ domain with the C-terminal tail of PRLHR. Interacts with UNC5A. Interacts (via AH domain) with NCS1/FREQ; in a calcium-dependent manner. Interacts with F-actin and associates with the ARP2/3 complex. Interacts (via PDZ domain) with ARF1 (activated); the interaction blocks Arp2/3 complex inhibition. Interacts with SORCS3. Post-translationally, phosphorylation at Thr-82 appears to inhibit the interaction with AMPA receptors. In terms of processing, palmitoylation on Cys-413 is essential for long-term synaptic depression (LTD). Ubiquitous.

It localises to the cytoplasm. Its subcellular location is the perinuclear region. The protein resides in the membrane. It is found in the postsynaptic density. The protein localises to the synapse. It localises to the synaptosome. Its subcellular location is the cytoskeleton. In terms of biological role, probable adapter protein that bind to and organize the subcellular localization of a variety of membrane proteins containing some PDZ recognition sequence. Involved in the clustering of various receptors, possibly by acting at the receptor internalization level. Plays a role in synaptic plasticity by regulating the trafficking and internalization of AMPA receptors. May be regulated upon PRKCA activation. May regulate ASIC1/ASIC3 channel. Regulates actin polymerization by inhibiting the actin-nucleating activity of the Arp2/3 complex; the function is competitive with nucleation promoting factors and is linked to neuronal morphology regulation and AMPA receptor (AMPAR) endocytosis. Via interaction with the Arp2/3 complex involved in regulation of synaptic plasicity of excitatory synapses and required for spine shrinkage during long-term depression (LTD). Involved in regulation of astrocyte morphology, antagonistic to Arp2/3 complex activator WASL/N-WASP function. The sequence is that of PRKCA-binding protein (PICK1) from Homo sapiens (Human).